The sequence spans 216 residues: DNA replication complex GINS protein PSF3 (216 aa).

The tract at residues 1-16 (MSEAYFRVESGALGPE) is not essential for folding and stability of GINS complex, but may regulate accessibility to the central complex pore.

The protein belongs to the GINS3/PSF3 family. As to quaternary structure, component of the GINS complex which is a heterotetramer of GINS1, GINS2, GINS3 and GINS4. Forms a stable subcomplex with GINS2. GINS complex interacts with DNA primase in vitro. Component of the CMG helicase complex, a hexameric ring of related MCM2-7 subunits stabilized by CDC45 and the tetrameric GINS complex.

The protein resides in the nucleus. Its subcellular location is the chromosome. In terms of biological role, required for correct functioning of the GINS complex, a complex that plays an essential role in the initiation of DNA replication, and progression of DNA replication forks. GINS complex is a core component of CDC45-MCM-GINS (CMG) helicase, the molecular machine that unwinds template DNA during replication, and around which the replisome is built. The chain is DNA replication complex GINS protein PSF3 (GINS3) from Bos taurus (Bovine).